The following is a 665-amino-acid chain: Methionine--tRNA ligase (665 aa).

A 'HIGH' region motif is present at residues 12–22 (YYPSGKLHIGS). The short motif at 308–312 (KMSKS) is the 'KMSKS' region element. Lys-311 serves as a coordination point for ATP. Residues 562–665 (TFDAVEIRVA…SSVPNGSIIG (104 aa)) enclose the tRNA-binding domain.

Belongs to the class-I aminoacyl-tRNA synthetase family. MetG type 2B subfamily. Homodimer.

The protein resides in the cytoplasm. The enzyme catalyses tRNA(Met) + L-methionine + ATP = L-methionyl-tRNA(Met) + AMP + diphosphate. Its function is as follows. Is required not only for elongation of protein synthesis but also for the initiation of all mRNA translation through initiator tRNA(fMet) aminoacylation. The polypeptide is Methionine--tRNA ligase (metG) (Streptococcus pyogenes serotype M3 (strain SSI-1)).